We begin with the raw amino-acid sequence, 452 residues long: Phosphoglucosamine mutase (452 aa).

Ser108 serves as the catalytic Phosphoserine intermediate. Mg(2+) is bound by residues Ser108, Asp247, Asp249, and Asp251. Phosphoserine is present on Ser108.

It belongs to the phosphohexose mutase family. The cofactor is Mg(2+). In terms of processing, activated by phosphorylation.

The catalysed reaction is alpha-D-glucosamine 1-phosphate = D-glucosamine 6-phosphate. Its function is as follows. Catalyzes the conversion of glucosamine-6-phosphate to glucosamine-1-phosphate. The chain is Phosphoglucosamine mutase from Burkholderia mallei (strain NCTC 10247).